Reading from the N-terminus, the 223-residue chain is Octanoyltransferase (223 aa).

The BPL/LPL catalytic domain maps to 35–214; the sequence is GEARELIWLL…HFPAMLAGLR (180 aa). Substrate-binding positions include 74 to 81, 145 to 147, and 158 to 160; these read RGGRYTYH, AIG, and GFS. The active-site Acyl-thioester intermediate is cysteine 176.

This sequence belongs to the LipB family.

It localises to the cytoplasm. The catalysed reaction is octanoyl-[ACP] + L-lysyl-[protein] = N(6)-octanoyl-L-lysyl-[protein] + holo-[ACP] + H(+). The protein operates within protein modification; protein lipoylation via endogenous pathway; protein N(6)-(lipoyl)lysine from octanoyl-[acyl-carrier-protein]: step 1/2. Its function is as follows. Catalyzes the transfer of endogenously produced octanoic acid from octanoyl-acyl-carrier-protein onto the lipoyl domains of lipoate-dependent enzymes. Lipoyl-ACP can also act as a substrate although octanoyl-ACP is likely to be the physiological substrate. The chain is Octanoyltransferase from Rhizorhabdus wittichii (strain DSM 6014 / CCUG 31198 / JCM 15750 / NBRC 105917 / EY 4224 / RW1) (Sphingomonas wittichii).